A 432-amino-acid chain; its full sequence is Adenylosuccinate synthetase (432 aa).

Residues 13 to 19 (GDEGKGK) and 41 to 43 (GHT) each bind GTP. The active-site Proton acceptor is D14. D14 and G41 together coordinate Mg(2+). IMP-binding positions include 14 to 17 (DEGK), 39 to 42 (NAGH), T130, R144, Q225, T240, and R304. Catalysis depends on H42, which acts as the Proton donor. 300-306 (ATTGRRR) is a substrate binding site. Residues R306, 332 to 334 (KLD), and 415 to 417 (STG) each bind GTP.

Belongs to the adenylosuccinate synthetase family. As to quaternary structure, homodimer. Mg(2+) serves as cofactor.

It localises to the cytoplasm. The catalysed reaction is IMP + L-aspartate + GTP = N(6)-(1,2-dicarboxyethyl)-AMP + GDP + phosphate + 2 H(+). It participates in purine metabolism; AMP biosynthesis via de novo pathway; AMP from IMP: step 1/2. Functionally, plays an important role in the de novo pathway of purine nucleotide biosynthesis. Catalyzes the first committed step in the biosynthesis of AMP from IMP. In Pectobacterium atrosepticum (strain SCRI 1043 / ATCC BAA-672) (Erwinia carotovora subsp. atroseptica), this protein is Adenylosuccinate synthetase.